A 297-amino-acid chain; its full sequence is Pyridoxal 5'-phosphate synthase subunit PdxS (297 aa).

Asp-27 provides a ligand contact to D-ribose 5-phosphate. The active-site Schiff-base intermediate with D-ribose 5-phosphate is the Lys-84. D-ribose 5-phosphate is bound at residue Gly-156. Arg-168 lines the D-glyceraldehyde 3-phosphate pocket. Residues Gly-217 and 238–239 contribute to the D-ribose 5-phosphate site; that span reads GS.

Belongs to the PdxS/SNZ family. In the presence of PdxT, forms a dodecamer of heterodimers.

It carries out the reaction aldehydo-D-ribose 5-phosphate + D-glyceraldehyde 3-phosphate + L-glutamine = pyridoxal 5'-phosphate + L-glutamate + phosphate + 3 H2O + H(+). The protein operates within cofactor biosynthesis; pyridoxal 5'-phosphate biosynthesis. Functionally, catalyzes the formation of pyridoxal 5'-phosphate from ribose 5-phosphate (RBP), glyceraldehyde 3-phosphate (G3P) and ammonia. The ammonia is provided by the PdxT subunit. Can also use ribulose 5-phosphate and dihydroxyacetone phosphate as substrates, resulting from enzyme-catalyzed isomerization of RBP and G3P, respectively. This is Pyridoxal 5'-phosphate synthase subunit PdxS from Corynebacterium efficiens (strain DSM 44549 / YS-314 / AJ 12310 / JCM 11189 / NBRC 100395).